The following is a 235-amino-acid chain: Repeat element protein (235 aa).

The segment at 57–235 (IFQELLERLS…ARRKKCRFSQ (179 aa)) is repeat element.

This chain is Repeat element protein, found in Campoletis sonorensis (CsIV).